A 173-amino-acid polypeptide reads, in one-letter code: Disulfide bond formation protein B (173 aa).

The Cytoplasmic segment spans residues 1–11; it reads MNALQWSFRAQ. The helical transmembrane segment at 12 to 28 threads the bilayer; sequence CLTGFLFCTGLLAYAIF. The Periplasmic portion of the chain corresponds to 29 to 46; sequence LQLHQGLEPCPLCIFQRI. Cys38 and Cys41 are oxidised to a cystine. Residues 47 to 63 traverse the membrane as a helical segment; the sequence is AFAVLGILFLIAGLYNS. The Cytoplasmic segment spans residues 64–70; the sequence is SNVYTRK. The helical transmembrane segment at 71-88 threads the bilayer; sequence AYGLLIFLTAAIGTGIAG. Over 89 to 145 the chain is Periplasmic; that stretch reads RHVWVQLMPHNTISSCGSPLSFLSETMGPFEVFRTVLTGTSDCGNIDWRFLGLSMPM. Cys104 and Cys131 form a disulfide bridge. Residues 146 to 164 form a helical membrane-spanning segment; sequence WSMFWFVALALLGLLVGFK. Residues 165-173 lie on the Cytoplasmic side of the membrane; sequence AERRKPLFS.

This sequence belongs to the DsbB family.

Its subcellular location is the cell inner membrane. Functionally, required for disulfide bond formation in some periplasmic proteins. Acts by oxidizing the DsbA protein. The sequence is that of Disulfide bond formation protein B from Xylella fastidiosa (strain 9a5c).